Here is a 301-residue protein sequence, read N- to C-terminus: Phosphatidylserine decarboxylase proenzyme (301 aa).

Active-site charge relay system; for autoendoproteolytic cleavage activity residues include D115, H171, and S258. The Schiff-base intermediate with substrate; via pyruvic acid; for decarboxylase activity role is filled by S258. Residue S258 is modified to Pyruvic acid (Ser); by autocatalysis.

The protein belongs to the phosphatidylserine decarboxylase family. PSD-B subfamily. Prokaryotic type II sub-subfamily. Heterodimer of a large membrane-associated beta subunit and a small pyruvoyl-containing alpha subunit. Pyruvate is required as a cofactor. Is synthesized initially as an inactive proenzyme. Formation of the active enzyme involves a self-maturation process in which the active site pyruvoyl group is generated from an internal serine residue via an autocatalytic post-translational modification. Two non-identical subunits are generated from the proenzyme in this reaction, and the pyruvate is formed at the N-terminus of the alpha chain, which is derived from the carboxyl end of the proenzyme. The autoendoproteolytic cleavage occurs by a canonical serine protease mechanism, in which the side chain hydroxyl group of the serine supplies its oxygen atom to form the C-terminus of the beta chain, while the remainder of the serine residue undergoes an oxidative deamination to produce ammonia and the pyruvoyl prosthetic group on the alpha chain. During this reaction, the Ser that is part of the protease active site of the proenzyme becomes the pyruvoyl prosthetic group, which constitutes an essential element of the active site of the mature decarboxylase.

Its subcellular location is the cell membrane. The catalysed reaction is a 1,2-diacyl-sn-glycero-3-phospho-L-serine + H(+) = a 1,2-diacyl-sn-glycero-3-phosphoethanolamine + CO2. The protein operates within phospholipid metabolism; phosphatidylethanolamine biosynthesis; phosphatidylethanolamine from CDP-diacylglycerol: step 2/2. In terms of biological role, catalyzes the formation of phosphatidylethanolamine (PtdEtn) from phosphatidylserine (PtdSer). The protein is Phosphatidylserine decarboxylase proenzyme of Chlamydia pneumoniae (Chlamydophila pneumoniae).